The chain runs to 235 residues: MFNNTTTSFGSGPGIVVVPTPATTVPTTDFPGTTITSNSTFIIIGPPPPFPAPPRSIDLTPLKLIFVVIAFVAVPALVYALFFNGPCSSSRRNSSSSRTSSSSDDTPHATVDTPPITETTVTSESGGKFHKDTHSKEIGNECSVCLMVFTDSDELRQLSECKHAFHVLCIETWLKDHPNCPICRTDVSVKQQTEAPNVPVNVNGNVNRSGGNRRVSATSRDDDWRQGLPDASSLV.

Residues 64–84 form a helical membrane-spanning segment; the sequence is LIFVVIAFVAVPALVYALFFN. The tract at residues 87–133 is disordered; the sequence is CSSSRRNSSSSRTSSSSDDTPHATVDTPPITETTVTSESGGKFHKDT. Over residues 88 to 103 the composition is skewed to low complexity; sequence SSSRRNSSSSRTSSSS. Residues 116–125 are compositionally biased toward polar residues; it reads ITETTVTSES. The RING-type; atypical zinc-finger motif lies at 142–184; sequence CSVCLMVFTDSDELRQLSECKHAFHVLCIETWLKDHPNCPICR. A compositionally biased stretch (low complexity) spans 201-216; that stretch reads NVNGNVNRSGGNRRVS. A disordered region spans residues 201-235; that stretch reads NVNGNVNRSGGNRRVSATSRDDDWRQGLPDASSLV.

Belongs to the RING-type zinc finger family. ATL subfamily.

It localises to the membrane. The catalysed reaction is S-ubiquitinyl-[E2 ubiquitin-conjugating enzyme]-L-cysteine + [acceptor protein]-L-lysine = [E2 ubiquitin-conjugating enzyme]-L-cysteine + N(6)-ubiquitinyl-[acceptor protein]-L-lysine.. It participates in protein modification; protein ubiquitination. The chain is RING-H2 finger protein ATL33 (ATL33) from Arabidopsis thaliana (Mouse-ear cress).